Consider the following 158-residue polypeptide: Small ribosomal subunit protein uS13 (158 aa).

This sequence belongs to the universal ribosomal protein uS13 family. In terms of assembly, part of the 30S ribosomal subunit. Forms a loose heterodimer with protein S19. Forms two bridges to the 50S subunit in the 70S ribosome.

Located at the top of the head of the 30S subunit, it contacts several helices of the 16S rRNA. In the 70S ribosome it contacts the 23S rRNA (bridge B1a) and protein L5 of the 50S subunit (bridge B1b), connecting the 2 subunits; these bridges are implicated in subunit movement. This chain is Small ribosomal subunit protein uS13, found in Picrophilus torridus (strain ATCC 700027 / DSM 9790 / JCM 10055 / NBRC 100828 / KAW 2/3).